The chain runs to 432 residues: Adenylosuccinate synthetase (432 aa).

Residues 13–19 (GDEGKGK) and 41–43 (GHT) contribute to the GTP site. Catalysis depends on Asp-14, which acts as the Proton acceptor. The Mg(2+) site is built by Asp-14 and Gly-41. IMP contacts are provided by residues 14–17 (DEGK), 39–42 (NAGH), Thr-130, Arg-144, Gln-225, Thr-240, and Arg-304. Catalysis depends on His-42, which acts as the Proton donor. 300-306 (ATTGRSR) is a substrate binding site. Residues Arg-306, 332–334 (KLD), and 415–417 (STG) each bind GTP.

This sequence belongs to the adenylosuccinate synthetase family. In terms of assembly, homodimer. Requires Mg(2+) as cofactor.

The protein localises to the cytoplasm. It carries out the reaction IMP + L-aspartate + GTP = N(6)-(1,2-dicarboxyethyl)-AMP + GDP + phosphate + 2 H(+). It functions in the pathway purine metabolism; AMP biosynthesis via de novo pathway; AMP from IMP: step 1/2. Its function is as follows. Plays an important role in the de novo pathway of purine nucleotide biosynthesis. Catalyzes the first committed step in the biosynthesis of AMP from IMP. The sequence is that of Adenylosuccinate synthetase from Yersinia enterocolitica serotype O:8 / biotype 1B (strain NCTC 13174 / 8081).